The chain runs to 81 residues: ATP synthase subunit c, chloroplastic (81 aa).

A run of 2 helical transmembrane segments spans residues 7-27 (AASVIAAGLSVGLASIGPGIG) and 57-77 (LAFMEALTIYGLVVALALLFA).

The protein belongs to the ATPase C chain family. In terms of assembly, F-type ATPases have 2 components, F(1) - the catalytic core - and F(0) - the membrane proton channel. F(1) has five subunits: alpha(3), beta(3), gamma(1), delta(1), epsilon(1). F(0) has four main subunits: a(1), b(1), b'(1) and c(10-14). The alpha and beta chains form an alternating ring which encloses part of the gamma chain. F(1) is attached to F(0) by a central stalk formed by the gamma and epsilon chains, while a peripheral stalk is formed by the delta, b and b' chains.

It is found in the plastid. Its subcellular location is the chloroplast thylakoid membrane. Functionally, f(1)F(0) ATP synthase produces ATP from ADP in the presence of a proton or sodium gradient. F-type ATPases consist of two structural domains, F(1) containing the extramembraneous catalytic core and F(0) containing the membrane proton channel, linked together by a central stalk and a peripheral stalk. During catalysis, ATP synthesis in the catalytic domain of F(1) is coupled via a rotary mechanism of the central stalk subunits to proton translocation. In terms of biological role, key component of the F(0) channel; it plays a direct role in translocation across the membrane. A homomeric c-ring of between 10-14 subunits forms the central stalk rotor element with the F(1) delta and epsilon subunits. This chain is ATP synthase subunit c, chloroplastic, found in Cryptomeria japonica (Japanese cedar).